Reading from the N-terminus, the 477-residue chain is Erythritol/L-threitol-binding protein (477 aa).

The tat-type signal signal peptide spans 1 to 38 (MMSRESQPGLHRQLSRRNMLAAMGLAGAAAVSLPVLSA).

The protein belongs to the bacterial solute-binding protein 1 family. In terms of processing, predicted to be exported by the Tat system. The position of the signal peptide cleavage has not been experimentally proven.

Its function is as follows. Part of an ABC transporter complex involved in erythritol/L-threitol import. Binds erythritol and L-threitol. Functions in the transport for the degradation pathways of erythritol and L-threitol, that allow M.smegmatis to grow on these compounds as the sole carbon source. This chain is Erythritol/L-threitol-binding protein, found in Mycolicibacterium smegmatis (strain ATCC 700084 / mc(2)155) (Mycobacterium smegmatis).